A 204-amino-acid chain; its full sequence is Ribonuclease HII (204 aa).

Residues 13 to 204 form the RNase H type-2 domain; it reads GPVAGCDEAG…VRRAARLHSS (192 aa). A divalent metal cation-binding residues include Asp-19, Glu-20, and Asp-113.

Belongs to the RNase HII family. The cofactor is Mn(2+). Mg(2+) serves as cofactor.

It is found in the cytoplasm. It carries out the reaction Endonucleolytic cleavage to 5'-phosphomonoester.. In terms of biological role, endonuclease that specifically degrades the RNA of RNA-DNA hybrids. The chain is Ribonuclease HII from Cutibacterium acnes (strain DSM 16379 / KPA171202) (Propionibacterium acnes).